The sequence spans 176 residues: uncharacterized protein (176 aa).

This is an uncharacterized protein from Aquifex aeolicus (strain VF5).